Reading from the N-terminus, the 384-residue chain is tRNA-specific 2-thiouridylase MnmA (384 aa).

Residues 29–36 and Leu-55 contribute to the ATP site; that span reads AMSGGVDS. The active-site Nucleophile is the Cys-123. Residues Cys-123 and Cys-220 are joined by a disulfide bond. Gly-147 contacts ATP. The segment at 169–171 is interaction with tRNA; sequence RDQ. Cys-220 functions as the Cysteine persulfide intermediate in the catalytic mechanism.

It belongs to the MnmA/TRMU family.

It is found in the cytoplasm. The catalysed reaction is S-sulfanyl-L-cysteinyl-[protein] + uridine(34) in tRNA + AH2 + ATP = 2-thiouridine(34) in tRNA + L-cysteinyl-[protein] + A + AMP + diphosphate + H(+). Functionally, catalyzes the 2-thiolation of uridine at the wobble position (U34) of tRNA, leading to the formation of s(2)U34. The protein is tRNA-specific 2-thiouridylase MnmA of Dinoroseobacter shibae (strain DSM 16493 / NCIMB 14021 / DFL 12).